The chain runs to 648 residues: Golgin subfamily A member 8G (648 aa).

The segment covering 1–11 (MWPQARLPPHP) has biased composition (pro residues). Disordered regions lie at residues 1–84 (MWPQ…SATL) and 119–139 (NKQVEHQLEEEKKANNEKQKA). Positions 50–62 (TNGSIHETATSGG) are enriched in polar residues. 3 coiled-coil regions span residues 105 to 160 (VSQL…LNTD), 223 to 275 (LEQS…MSQE), and 318 to 424 (EVEL…QQKQ). The span at 121 to 139 (QVEHQLEEEKKANNEKQKA) shows a compositional bias: basic and acidic residues. Disordered regions lie at residues 356–376 (LREQEERLQEQQERLPEQEER), 434–461 (ALPGEGDGGGHLDSEGEEAPRPIPSIPQ), 508–549 (PITK…GVAA), and 600–624 (PVQGEAREGSPHDNPTAQPIVQDHQ). A compositionally biased stretch (basic and acidic residues) spans 441-453 (GGGHLDSEGEEAP). Over residues 521–534 (PGGGHHQAGPGQGG) the composition is skewed to gly residues.

Belongs to the GOLGA8 family.

The protein is Golgin subfamily A member 8G of Homo sapiens (Human).